Here is a 536-residue protein sequence, read N- to C-terminus: Chaperonin GroEL 1 (536 aa).

Residues 29-32 (TLGP), 86-90 (DGTTT), G413, 476-478 (NAA), and D492 each bind ATP.

Belongs to the chaperonin (HSP60) family. Forms a cylinder of 14 subunits composed of two heptameric rings stacked back-to-back. Interacts with the co-chaperonin GroES.

The protein localises to the cytoplasm. The enzyme catalyses ATP + H2O + a folded polypeptide = ADP + phosphate + an unfolded polypeptide.. Together with its co-chaperonin GroES, plays an essential role in assisting protein folding. The GroEL-GroES system forms a nano-cage that allows encapsulation of the non-native substrate proteins and provides a physical environment optimized to promote and accelerate protein folding. This Nocardia farcinica (strain IFM 10152) protein is Chaperonin GroEL 1.